A 680-amino-acid polypeptide reads, in one-letter code: Chaperone protein dnaK3 (680 aa).

A Phosphothreonine; by autocatalysis modification is found at Thr205. Positions Gly640–Trp680 are disordered.

Belongs to the heat shock protein 70 family.

Acts as a chaperone. The polypeptide is Chaperone protein dnaK3 (dnaK3) (Thermosynechococcus vestitus (strain NIES-2133 / IAM M-273 / BP-1)).